The sequence spans 45 residues: MSKRTYQPNNRRRAKTHGFRVRMRTRAGRAIIAARRRKGRRELTA.

This sequence belongs to the bacterial ribosomal protein bL34 family.

The sequence is that of Large ribosomal subunit protein bL34 from Acidothermus cellulolyticus (strain ATCC 43068 / DSM 8971 / 11B).